The sequence spans 468 residues: 3-isopropylmalate dehydratase large subunit (468 aa).

Positions 347, 407, and 410 each coordinate [4Fe-4S] cluster.

The protein belongs to the aconitase/IPM isomerase family. LeuC type 1 subfamily. Heterodimer of LeuC and LeuD. [4Fe-4S] cluster is required as a cofactor.

The enzyme catalyses (2R,3S)-3-isopropylmalate = (2S)-2-isopropylmalate. It functions in the pathway amino-acid biosynthesis; L-leucine biosynthesis; L-leucine from 3-methyl-2-oxobutanoate: step 2/4. Its function is as follows. Catalyzes the isomerization between 2-isopropylmalate and 3-isopropylmalate, via the formation of 2-isopropylmaleate. The sequence is that of 3-isopropylmalate dehydratase large subunit from Prochlorococcus marinus (strain SARG / CCMP1375 / SS120).